Reading from the N-terminus, the 309-residue chain is D-galacturonate reductase (309 aa).

Catalysis depends on Tyr-50, which acts as the Proton donor. His-109 provides a ligand contact to substrate. 210 to 264 (SPLGSTGSPLMSADPVVKIAEKKGISPTTVLLSYHVNRGSTVLAKSVTPARIKAN) is a binding site for NADP(+).

The protein belongs to the aldo/keto reductase family.

The enzyme catalyses L-galactonate + NADP(+) = aldehydo-D-galacturonate + NADPH + H(+). The protein operates within carbohydrate acid metabolism. In terms of biological role, mediates the reduction of D-galacturonate to L-galactonate, the first step in D-galacturonate catabolic process. Also has activity with D-glucuronate and DL-glyceraldehyde. No activity is observed with D-glucose, D-fructose, D-xylose, D-galactose, L-arabinose or D-mannose. Activity is seen only with NADPH and not with NADH. The polypeptide is D-galacturonate reductase (gar1) (Hypocrea jecorina (Trichoderma reesei)).